Here is a 396-residue protein sequence, read N- to C-terminus: Na(+)/H(+) antiporter NhaA 1 (396 aa).

11 helical membrane-spanning segments follow: residues 15-35, 60-80, 96-116, 126-146, 155-175, 179-199, 207-227, 255-275, 290-312, 329-349, and 363-383; these read AGIF…VGFL, LEFW…GLEL, FLPS…FAVI, GWAI…ALLG, IFVL…IALF, ALNF…LVMC, IPFV…GIHA, SLGY…NAGV, PLGV…SWFL, LYAV…VDNL, and LAIL…AKAV.

The protein belongs to the NhaA Na(+)/H(+) (TC 2.A.33) antiporter family.

It localises to the cell inner membrane. The catalysed reaction is Na(+)(in) + 2 H(+)(out) = Na(+)(out) + 2 H(+)(in). Its function is as follows. Na(+)/H(+) antiporter that extrudes sodium in exchange for external protons. The protein is Na(+)/H(+) antiporter NhaA 1 of Campylobacter hominis (strain ATCC BAA-381 / DSM 21671 / CCUG 45161 / LMG 19568 / NCTC 13146 / CH001A).